A 282-amino-acid chain; its full sequence is Diaminopimelate epimerase (282 aa).

Residues Asn13, Gln45, and Asn64 each coordinate substrate. Cys73 (proton donor) is an active-site residue. Substrate is bound by residues 74 to 75 (GN), Asn155, Asn189, and 207 to 208 (ER). Residue Cys216 is the Proton acceptor of the active site. 217-218 (GS) contacts substrate.

It belongs to the diaminopimelate epimerase family. Homodimer.

It localises to the cytoplasm. The enzyme catalyses (2S,6S)-2,6-diaminopimelate = meso-2,6-diaminopimelate. Its pathway is amino-acid biosynthesis; L-lysine biosynthesis via DAP pathway; DL-2,6-diaminopimelate from LL-2,6-diaminopimelate: step 1/1. Functionally, catalyzes the stereoinversion of LL-2,6-diaminopimelate (L,L-DAP) to meso-diaminopimelate (meso-DAP), a precursor of L-lysine and an essential component of the bacterial peptidoglycan. The sequence is that of Diaminopimelate epimerase from Bartonella bacilliformis (strain ATCC 35685 / KC583 / Herrer 020/F12,63).